The sequence spans 146 residues: MAKEEVKQKKTKEKEPDITFFHPDILEVPKDGGLPYLKGYRCKKCGQLDFKTEMCTNCWSEEFEMVPLSRRGKVYSFSDIYIGQQGLATPYIFAYVDLPENLRVFAQLEGEVDTYRCDEEVELTLGPIRMNNDNLPIISYKFKKIA.

Cys42, Cys45, Cys55, and Cys58 together coordinate Zn(2+).

It belongs to the BbsA family. In terms of assembly, heterotetramer composed of two BbsA subunits and two BbsB subunits. Both BbsA and BbsB are essential for enzymatic activity.

It catalyses the reaction (S)-2-benzoylsuccinyl-CoA + CoA = benzoyl-CoA + succinyl-CoA. The protein operates within xenobiotic degradation; toluene degradation. Functionally, component of the BbsAB thiolase complex, which catalyzes the thiolytic cleavage of (S)-2-benzoylsuccinyl-CoA to succinyl-CoA and benzoyl-CoA, the final step of anaerobic toluene metabolism. The BbsA subunit critically contributes to an induced-fit process for productive binding of a CoA substrate into the active site of BbsB. The chain is Benzoylsuccinyl-CoA thiolase subunit BbsA from Geobacter metallireducens (strain ATCC 53774 / DSM 7210 / GS-15).